A 514-amino-acid chain; its full sequence is Peptide chain release factor 3 (514 aa).

A tr-type G domain is found at 8-268; sequence KKRRTFAIIS…IFLKFAPEPH (261 aa). GTP contacts are provided by residues 17-24, 85-89, and 139-142; these read SHPDAGKT, DTPGH, and NKLD.

This sequence belongs to the TRAFAC class translation factor GTPase superfamily. Classic translation factor GTPase family. PrfC subfamily.

It localises to the cytoplasm. In terms of biological role, increases the formation of ribosomal termination complexes and stimulates activities of RF-1 and RF-2. It binds guanine nucleotides and has strong preference for UGA stop codons. It may interact directly with the ribosome. The stimulation of RF-1 and RF-2 is significantly reduced by GTP and GDP, but not by GMP. In Streptococcus pneumoniae serotype 2 (strain D39 / NCTC 7466), this protein is Peptide chain release factor 3.